The following is a 110-amino-acid chain: Heat shock protein Hsp-12.2 (110 aa).

In terms of domain architecture, sHSP spans 15 to 110 (DWPLQHNDGV…VLTITASKKA (96 aa)).

Belongs to the small heat shock protein (HSP20) family.

This Caenorhabditis elegans protein is Heat shock protein Hsp-12.2 (hsp-12.2).